The primary structure comprises 282 residues: Probable septum site-determining protein MinC (282 aa).

The segment at 108 to 127 (AAARSADEESANAAAAAPAA) is disordered. The segment covering 118 to 127 (ANAAAAAPAA) has biased composition (low complexity).

This sequence belongs to the MinC family. As to quaternary structure, interacts with MinD and FtsZ.

In terms of biological role, cell division inhibitor that blocks the formation of polar Z ring septums. Rapidly oscillates between the poles of the cell to destabilize FtsZ filaments that have formed before they mature into polar Z rings. Prevents FtsZ polymerization. In Paraburkholderia xenovorans (strain LB400), this protein is Probable septum site-determining protein MinC.